The chain runs to 284 residues: Bifunctional protein FolD (284 aa).

Residues 165-167 (GRS), Ser190, and Ile231 each bind NADP(+).

It belongs to the tetrahydrofolate dehydrogenase/cyclohydrolase family. Homodimer.

The enzyme catalyses (6R)-5,10-methylene-5,6,7,8-tetrahydrofolate + NADP(+) = (6R)-5,10-methenyltetrahydrofolate + NADPH. The catalysed reaction is (6R)-5,10-methenyltetrahydrofolate + H2O = (6R)-10-formyltetrahydrofolate + H(+). The protein operates within one-carbon metabolism; tetrahydrofolate interconversion. Catalyzes the oxidation of 5,10-methylenetetrahydrofolate to 5,10-methenyltetrahydrofolate and then the hydrolysis of 5,10-methenyltetrahydrofolate to 10-formyltetrahydrofolate. The polypeptide is Bifunctional protein FolD (Dechloromonas aromatica (strain RCB)).